A 246-amino-acid polypeptide reads, in one-letter code: ATP synthase subunit a (246 aa).

The propeptide at 1 to 3 (MIY) is removed in mature form. Helical transmembrane passes span 25–45 (VNNYVMYVALVVTLMYSSVFL), 51–71 (LGFNRWGVALLAVYDTILNMV), 79–99 (GGMYFPFMFTLFTFMLVANLV), 112–132 (LVAIVSFSLSLWFGCVLMGLS), 138–158 (FFALFVPGGTPLALVPVLVLI), 178–198 (VLSGHLLMLILGTLMFNLMGS), and 203–223 (FMGGFMPVMGVIAIVVTEFAI).

It belongs to the ATPase A chain family. As to quaternary structure, F-type ATPases have 2 components, CF(1) - the catalytic core - and CF(0) - the membrane proton channel. CF(1) has five subunits: alpha(3), beta(3), gamma(1), delta(1), epsilon(1). CF(0) has three main subunits: a, b and c.

The protein localises to the mitochondrion inner membrane. Functionally, mitochondrial membrane ATP synthase (F(1)F(0) ATP synthase or Complex V) produces ATP from ADP in the presence of a proton gradient across the membrane which is generated by electron transport complexes of the respiratory chain. F-type ATPases consist of two structural domains, F(1) - containing the extramembraneous catalytic core and F(0) - containing the membrane proton channel, linked together by a central stalk and a peripheral stalk. During catalysis, ATP synthesis in the catalytic domain of F(1) is coupled via a rotary mechanism of the central stalk subunits to proton translocation. Key component of the proton channel; it may play a direct role in the translocation of protons across the membrane. The protein is ATP synthase subunit a (ATP6) of Debaryomyces hansenii (strain ATCC 36239 / CBS 767 / BCRC 21394 / JCM 1990 / NBRC 0083 / IGC 2968) (Yeast).